Reading from the N-terminus, the 565-residue chain is Membrane protein insertase YidC (565 aa).

A run of 6 helical transmembrane segments spans residues 6–26, 348–368, 370–390, 437–457, 479–499, and 516–536; these read VLLI…WGKN, LMAL…SLLH, WGWA…PLSA, GGCF…WVLV, PYFI…KLTP, and PLIF…YWVI.

The protein belongs to the OXA1/ALB3/YidC family. Type 1 subfamily. Interacts with the Sec translocase complex via SecD. Specifically interacts with transmembrane segments of nascent integral membrane proteins during membrane integration.

Its subcellular location is the cell inner membrane. Its function is as follows. Required for the insertion and/or proper folding and/or complex formation of integral membrane proteins into the membrane. Involved in integration of membrane proteins that insert both dependently and independently of the Sec translocase complex, as well as at least some lipoproteins. Aids folding of multispanning membrane proteins. The polypeptide is Membrane protein insertase YidC (Xylella fastidiosa (strain 9a5c)).